Consider the following 84-residue polypeptide: MEKLTILLLVAAVLMSTHAMFQGGGEKSRKAINFSETRKLARNKQKRCDGWSTYCHDDSECCSETCANSYCTLIKGVRTTSHPI.

The first 19 residues, 1 to 19 (MEKLTILLLVAAVLMSTHA), serve as a signal peptide directing secretion. A propeptide spanning residues 20–47 (MFQGGGEKSRKAINFSETRKLARNKQKR) is cleaved from the precursor. Cystine bridges form between Cys48/Cys62, Cys55/Cys66, and Cys61/Cys71. Trp51 is modified (6'-bromotryptophan; in Am6.1b). Residues Glu60 and Glu64 each carry the 4-carboxyglutamate; partial; in Am6.1b and Am6.1c modification. Residues 78-84 (RTTSHPI) constitute a propeptide that is removed on maturation.

The protein belongs to the conotoxin O2 family. In terms of processing, three forms of this peptides have been described. The unmodified Am6.1a (Am3286) is not detected in the venom; Am6.1b (Am3408) is only Trp brominated, while Am6.1c (Am3452) is both Trp brominated and Glu gamma-carboxyglutamated. Both Am6.1b and Am6.1c are detected in the venom. In terms of tissue distribution, expressed by the venom duct.

The protein localises to the secreted. Functionally, gamma-conotoxins may act on voltage-gated non-specific cation pacemaker channels (HCN). The protein is Conotoxin Am6.1 of Conus amadis (Amadis cone).